Here is a 358-residue protein sequence, read N- to C-terminus: sn-glycerol-3-phosphate import ATP-binding protein UgpC (358 aa).

In terms of domain architecture, ABC transporter spans V4–I235. G37–S44 serves as a coordination point for ATP.

The protein belongs to the ABC transporter superfamily. sn-glycerol-3-phosphate importer (TC 3.A.1.1.3) family. In terms of assembly, the complex is composed of two ATP-binding proteins (UgpC), two transmembrane proteins (UgpA and UgpE) and a solute-binding protein (UgpB).

The protein localises to the cell inner membrane. The catalysed reaction is sn-glycerol 3-phosphate(out) + ATP + H2O = sn-glycerol 3-phosphate(in) + ADP + phosphate + H(+). Part of the ABC transporter complex UgpBAEC involved in sn-glycerol-3-phosphate (G3P) import. Responsible for energy coupling to the transport system. The sequence is that of sn-glycerol-3-phosphate import ATP-binding protein UgpC from Roseobacter denitrificans (strain ATCC 33942 / OCh 114) (Erythrobacter sp. (strain OCh 114)).